Reading from the N-terminus, the 386-residue chain is Patatin-2-Kuras 2 (386 aa).

A signal peptide spans Met-1–Ala-23. The 198-residue stretch at Leu-32–Leu-229 folds into the PNPLA domain. The short motif at Gly-36 to Gly-41 is the GXGXXG element. The short motif at Gly-75–Gly-79 is the GXSXG element. Ser-77 functions as the Nucleophile in the catalytic mechanism. N-linked (GlcNAc...) asparagine glycosylation is present at Asn-115. The active-site Proton acceptor is the Asp-215. Positions Asp-215–Ala-217 match the DGA/G motif. A coiled-coil region spans residues Glu-321–Ala-384.

Belongs to the patatin family.

It localises to the vacuole. Probable lipolytic acyl hydrolase (LAH), an activity which is thought to be involved in the response of tubers to pathogens. This Solanum tuberosum (Potato) protein is Patatin-2-Kuras 2 (pat2-k2).